The sequence spans 281 residues: MTRLRTAIEAATATLAAAGVATPRIDAELLAAHSLGVDRGRLMFVDDPDPEALAAFEHLVAARAKRIPLQHLVGTAAFGPLTLEVGPGVFIPRPETESLLEWAVAQQLPRDAVIVDLCTGTGALALALAQHRPQARVIAVEDSPAALEYARCNAAGTSVEVLAADVTAPDLLPELDGAVDLVVSNPPYIPEGAELDPEVADHDPAHALFGGPDGMAVIRPIVALAARWLRDGGKCAVEHDDTTSARTVEAFTHDGNFTDVTARHDLTGRPRFVTATRIARS.

The S-adenosyl-L-methionine site is built by Glu141 and Asn185. 185–188 (NPPY) contributes to the substrate binding site.

This sequence belongs to the protein N5-glutamine methyltransferase family. PrmC subfamily.

The enzyme catalyses L-glutaminyl-[peptide chain release factor] + S-adenosyl-L-methionine = N(5)-methyl-L-glutaminyl-[peptide chain release factor] + S-adenosyl-L-homocysteine + H(+). In terms of biological role, methylates the class 1 translation termination release factors RF1/PrfA and RF2/PrfB on the glutamine residue of the universally conserved GGQ motif. This is Release factor glutamine methyltransferase from Mycolicibacterium smegmatis (strain ATCC 700084 / mc(2)155) (Mycobacterium smegmatis).